The primary structure comprises 308 residues: Oxygen-dependent coproporphyrinogen-III oxidase (308 aa).

Ser97 provides a ligand contact to substrate. A divalent metal cation-binding residues include His101 and His111. Residue His111 is the Proton donor of the active site. Substrate is bound at residue 113–115 (NVR). A divalent metal cation is bound by residues His153 and His183. Residues 248–283 (YVEFNLVWDRGTHFGLQSGGRTESILMSMPPLASWS) form an important for dimerization region. Residue 266 to 268 (GGR) participates in substrate binding.

Belongs to the aerobic coproporphyrinogen-III oxidase family. In terms of assembly, homodimer. A divalent metal cation is required as a cofactor.

The protein resides in the cytoplasm. The enzyme catalyses coproporphyrinogen III + O2 + 2 H(+) = protoporphyrinogen IX + 2 CO2 + 2 H2O. It participates in porphyrin-containing compound metabolism; protoporphyrin-IX biosynthesis; protoporphyrinogen-IX from coproporphyrinogen-III (O2 route): step 1/1. Involved in the heme biosynthesis. Catalyzes the aerobic oxidative decarboxylation of propionate groups of rings A and B of coproporphyrinogen-III to yield the vinyl groups in protoporphyrinogen-IX. This is Oxygen-dependent coproporphyrinogen-III oxidase from Polaromonas sp. (strain JS666 / ATCC BAA-500).